A 440-amino-acid polypeptide reads, in one-letter code: Cytochrome P450 monooygenase 1 (440 aa).

Cysteine 381 is a binding site for heme.

Belongs to the cytochrome P450 family. The cofactor is heme.

Its pathway is plant hormone biosynthesis; gibberellin biosynthesis. GA14 synthase; part of the gene cluster that mediates the biosynthesis of gibberellins (GAs), diterpenoids that may provide a selective advantage during infection of the preferred host plant, rice. Gibberellins (GAs) are diterpenoids and are synthesized via the mevalonate pathway. Biosynthesis of the major metabolite GA3 (gibberellic acid) from geranylgeranyl diphosphate (GGPP) requires 13 steps. The GGPP produced by the geranylgeranyl diphosphate synthase GGS2 is converted to ent-kaurene via ent-copalyldiphosphate in a two-step cyclization reaction performed by the bifunctional ent-copalyl diphosphate synthase/ent-kaurene synthase enzyme (CPS/KS). Ent-Kaurene is metabolized to GAs by a series of oxidation reactions catalyzed by cytochrome P450 monooxygenases. Cytochrome P450 monooxygenase P450-4 is an ent-kaurene oxidase that catalyzes the three oxidation steps between ent-kaurene and ent-kaurenoic acid. The highly multifunctional cytochrome P450 monooxygenase P450-1 then catalyzes four steps involving oxidation at two carbon atoms, in the main pathway from ent-kaurenoic acid to GA14 via GA12-aldehyde as well as producing kaurenolides and fujenoic acids as by-products. The cytochrome P450 monooxygenase P450-2 then converts GA14 to GA4 by removal of C-20. GA4 is further converted to GA7 by the GA4 desaturase DES via 1,2-desaturation before cytochrome P450 monooxygenase P450-3, a 13-hydroxylase, hydroxylates GA7 to GA3, the final product of the GA-biosynthetic pathway. In Gibberella fujikuroi (strain CBS 195.34 / IMI 58289 / NRRL A-6831) (Bakanae and foot rot disease fungus), this protein is Cytochrome P450 monooygenase 1.